We begin with the raw amino-acid sequence, 175 residues long: Urease accessory protein UreE (175 aa).

Positions 151–175 are disordered; that stretch reads GGAYGGSPSHAHRHSHVHSHSHETP. Positions 160 to 169 are enriched in basic residues; that stretch reads HAHRHSHVHS.

Belongs to the UreE family.

Its subcellular location is the cytoplasm. Its function is as follows. Involved in urease metallocenter assembly. Binds nickel. Probably functions as a nickel donor during metallocenter assembly. The polypeptide is Urease accessory protein UreE (Synechococcus sp. (strain WH7805)).